Reading from the N-terminus, the 775-residue chain is MDHHAQHHPRSHACVLPNGLRLHLAHDPAASRAAAWLRVAAGSHDEPSAHPGLAHFLEHLSFLGGAAFPGDERLMPWLQVRGGQVNASTLGKTTDYFFEVTAEHLGAGLARLIDMLARPLLDIDAQRREREVLEAEYLARSADEQTLIDAALALGLPAGHPLRRFAAGRRDSLALESDAFQRALREFHAAHYHAGNCQLWLQGPQTLDELERLAQRACADLPGRAPGASPPPPPLLPFACEALALRLPGPPRLVLGFALDALRGADEQTLLAFAELLGDRSPGGLLAALGEQGLGESVALRVVHRDARQALLALTFELFDGSAAAALEAAFFDWLGALRDDAASLLAARRPLLAEPTAPLERLRQRVLGLPAEIRPACLDALRADRCLRLHLDSELDGAEARWSAGFRLSVAPVAAAPPLAAQRHAWRFELPLPPSAAAEGALFLRWRFPGVPARSRFLALRQALRPLCGQARLGGVEMGLEALGEDWSLSLLGPRDRLEAAVRPALARLLAAPPDWRANGERLSSAERRRSATGLPIRQLLDALPGLLGEPLAEVDDWRRTRWDALVMQAAMPDPRWMPGQAAGERLEPLPPRPGRHRRELAVDGESALLLFCPLPTQEVPMEAAWRLLARLHEPAFQRRLRDELQLGYALFCGFREVGARRGLLFAAQSPRACPARLLEHMETFLQRSAEALAQLPARRLAGLRKALADDLRRAPGSFAERARRAWAEHLGGGAGRSRLLAEAALGLSGDDLLAAQARLLEARGGWWVLSSRR.

Histidine 55 is a binding site for Zn(2+). Catalysis depends on glutamate 58, which acts as the Proton acceptor. Histidine 59 and glutamate 136 together coordinate Zn(2+).

This sequence belongs to the peptidase M16 family. The cofactor is Zn(2+).

It participates in cofactor biosynthesis; pyrroloquinoline quinone biosynthesis. Its function is as follows. Required for coenzyme pyrroloquinoline quinone (PQQ) biosynthesis. It is thought that this protein is a protease that cleaves peptides bond in a small peptide (gene pqqA), providing the glutamate and tyrosine residues which are necessary for the synthesis of PQQ. This Pseudomonas aeruginosa (strain ATCC 15692 / DSM 22644 / CIP 104116 / JCM 14847 / LMG 12228 / 1C / PRS 101 / PAO1) protein is Coenzyme PQQ synthesis protein F (pqqF).